The following is a 538-amino-acid chain: Syncytin-1 (538 aa).

An N-terminal signal peptide occupies residues 1 to 20; sequence MALPYHIFLFTVLLPSFTLT. The Extracellular segment spans residues 31–443; sequence SSPYQEFLWR…NIGPWGLLSQ (413 aa). A glycan (N-linked (GlcNAc...) asparagine) is linked at asparagine 169. Positions 186 to 189 match the CXXC motif; that stretch reads CWMC. 3 cysteine pairs are disulfide-bonded: cysteine 186–cysteine 189, cysteine 186–cysteine 405, and cysteine 397–cysteine 404. N-linked (GlcNAc...) asparagine glycosylation is found at asparagine 208, asparagine 214, asparagine 234, asparagine 242, and asparagine 281. Residues 320–340 form a fusion peptide region; it reads ILPFVMGAGVLGALGTGIGSI. Positions 380–396 are immunosuppression; it reads LQNRRALDLLTAERGGT. The CX6CC motif lies at 397-405; it reads CLFLGEECC. Residue asparagine 409 is glycosylated (N-linked (GlcNAc...) asparagine). A helical transmembrane segment spans residues 444–464; the sequence is WMPWILPFLGPLAAIILLLLF. Residues 465–484 are essential for the fusiogenic function; that stretch reads GPCIFNLLVNFVSSRIEAIK. The Cytoplasmic portion of the chain corresponds to 465–538; that stretch reads GPCIFNLLVN…LLRPNSAGSS (74 aa). The tract at residues 494 to 538 is disordered; that stretch reads KTKNYRRSLDWPASPRSDVNDIKGIPPEEISTAQPLLRPNSAGSS.

This sequence belongs to the gamma type-C retroviral envelope protein family. HERV class-I W env subfamily. The mature envelope protein (Env) consists of a trimer of SU-TM heterodimers attached probably by a labile interchain disulfide bond. Interacts with the C-type lectin CD209/DC-SIGN. Post-translationally, specific enzymatic cleavages in vivo yield mature proteins. Envelope glycoproteins are synthesized as an inactive precursor that is heavily N-glycosylated and processed likely by furin in the Golgi to yield the mature SU and TM proteins. The cleavage site between SU and TM requires the minimal sequence [KR]-X-[KR]-R. The CXXC motif is highly conserved across a broad range of retroviral envelope proteins. It is thought to participate in the formation of a labile disulfide bond possibly with the CX6CC motif present in the transmembrane protein.

It is found in the cell membrane. The protein resides in the virion. Functionally, this endogenous retroviral envelope protein has retained its original fusogenic properties and participates in trophoblast fusion and the formation of a syncytium during placenta morphogenesis. May recognize and induce fusion through binding of SLC1A4 and SLC1A5. In terms of biological role, endogenous envelope proteins may have kept, lost or modified their original function during evolution. Retroviral envelope proteins mediate receptor recognition and membrane fusion during early infection. The surface protein (SU) mediates receptor recognition, while the transmembrane protein (TM) acts as a class I viral fusion protein. The protein may have at least 3 conformational states: pre-fusion native state, pre-hairpin intermediate state, and post-fusion hairpin state. During viral and target cell membrane fusion, the coiled coil regions (heptad repeats) assume a trimer-of-hairpins structure, positioning the fusion peptide in close proximity to the C-terminal region of the ectodomain. The formation of this structure appears to drive apposition and subsequent fusion of membranes. This is Syncytin-1 (ERVW-1) from Hylobates pileatus (Pileated gibbon).